Here is a 345-residue protein sequence, read N- to C-terminus: DNA-directed RNA polymerases I and III subunit rpac1 (345 aa).

A compositionally biased stretch (polar residues) spans 1–11 (MVNKSTTNGVS). Positions 1-20 (MVNKSTTNGVSDPNLENKRT) are disordered.

Belongs to the archaeal Rpo3/eukaryotic RPB3 RNA polymerase subunit family. As to quaternary structure, component of the RNA polymerase I (Pol I) and RNA polymerase III (Pol III) complexes consisting of at least 13 and 17 subunits, respectively. Interacts with RPAC19/RPAC2.

It is found in the nucleus. In terms of biological role, DNA-dependent RNA polymerase catalyzes the transcription of DNA into RNA using the four ribonucleoside triphosphates as substrates. Common component of RNA polymerases I and III which synthesize ribosomal RNA precursors and small RNAs, such as 5S rRNA and tRNAs, respectively. RPAC1 is part of the Pol core element with the central large cleft and probably a clamp element that moves to open and close the cleft. The polypeptide is DNA-directed RNA polymerases I and III subunit rpac1 (polr1c) (Dictyostelium discoideum (Social amoeba)).